A 398-amino-acid polypeptide reads, in one-letter code: MDSSTGPGNTSDCSDPLAQASCSPAPGSWLNLSHVDGNQSDPCGLNRTGLGGNDSLCPQTGSPSMVTAITIMALYSIVCVVGLFGNFLVMYVIVRYTKMKTATNIYIFNLALADALATSTLPFQSVNYLMGTWPFGTILCKIVISIDYYNMFTSIFTLCTMSVDRYIAVCHPVKALDFRTPRNAKIVNVCNWILSSAIGLPVMFMATTKYRQGSIDCTLTFSHPTWYWENLLKICVFIFAFIMPVLIITVCYGLMILRLKSVRMLSGSKEKDRNLRRITRMVLVVVAVFIVCWTPIHIYVIIKALITIPETTFQTVSWHFCIALGYTNSCLNPVLYAFLDENFKRCFREFCIPTSSTIEQQNSTRVRQNTREHPSTANTVDRTNHQLENLEAETAPLP.

At 1–66 the chain is on the extracellular side; sequence MDSSTGPGNT…CPQTGSPSMV (66 aa). N-linked (GlcNAc...) asparagine glycosylation is found at Asn-9, Asn-31, Asn-38, Asn-46, and Asn-53. A helical membrane pass occupies residues 67–91; sequence TAITIMALYSIVCVVGLFGNFLVMY. Residues 92–104 are Cytoplasmic-facing; it reads VIVRYTKMKTATN. Residues 105-129 traverse the membrane as a helical segment; that stretch reads IYIFNLALADALATSTLPFQSVNYL. Topologically, residues 130 to 140 are extracellular; that stretch reads MGTWPFGTILC. Cys-140 and Cys-217 are joined by a disulfide. Residues 141–163 form a helical membrane-spanning segment; the sequence is KIVISIDYYNMFTSIFTLCTMSV. Over 164–183 the chain is Cytoplasmic; that stretch reads DRYIAVCHPVKALDFRTPRN. A Phosphotyrosine modification is found at Tyr-166. Residues 184 to 205 traverse the membrane as a helical segment; it reads AKIVNVCNWILSSAIGLPVMFM. The Extracellular segment spans residues 206–228; that stretch reads ATTKYRQGSIDCTLTFSHPTWYW. The helical transmembrane segment at 229–253 threads the bilayer; sequence ENLLKICVFIFAFIMPVLIITVCYG. Residues 254-277 lie on the Cytoplasmic side of the membrane; the sequence is LMILRLKSVRMLSGSKEKDRNLRR. A helical transmembrane segment spans residues 278–304; that stretch reads ITRMVLVVVAVFIVCWTPIHIYVIIKA. Residues 305-312 lie on the Extracellular side of the membrane; sequence LITIPETT. A helical membrane pass occupies residues 313-336; the sequence is FQTVSWHFCIALGYTNSCLNPVLY. The NPxxY; plays a role in stabilizing the activated conformation of the receptor motif lies at 332-336; it reads NPVLY. Over 337 to 398 the chain is Cytoplasmic; sequence AFLDENFKRC…NLEAETAPLP (62 aa). The S-palmitoyl cysteine moiety is linked to residue Cys-351. Residues 361–385 form a disordered region; that stretch reads QNSTRVRQNTREHPSTANTVDRTNH. Ser-363 carries the post-translational modification Phosphoserine. Residue Thr-370 is modified to Phosphothreonine. A Phosphoserine modification is found at Ser-375. At Thr-394 the chain carries Phosphothreonine.

This sequence belongs to the G-protein coupled receptor 1 family. In terms of assembly, forms homooligomers and heterooligomers with other GPCRs, such as OPRD1, OPRK1, OPRL1, NPFFR2, ADRA2A, SSTR2, CNR1 and CCR5 (probably in dimeric forms). Interacts with heterotrimeric G proteins; interaction with a heterotrimeric complex containing GNAI1, GNB1 and GNG2 stabilizes the active conformation of the receptor and increases its affinity for endomorphin-2, the synthetic opioid peptide DAMGO and for morphinan agonists. Interacts with PPL; the interaction disrupts agonist-mediated G-protein activation. Interacts (via C-terminus) with DNAJB4 (via C-terminus). Interacts with calmodulin; the interaction inhibits the constitutive activity of OPRM1; it abolishes basal and attenuates agonist-stimulated G-protein coupling. Interacts with FLNA, PLD2, RANBP9 and WLS and GPM6A. Interacts with RTP4. Interacts with SYP and GNAS. Interacts with RGS9, RGS17, RGS20, RGS4, PPP1R9B and HINT1. In terms of processing, phosphorylated. Differentially phosphorylated in basal and agonist-induced conditions. Agonist-mediated phosphorylation modulates receptor internalization. Phosphorylated by GRK2 in a agonist-dependent manner. Phosphorylation at Tyr-166 requires receptor activation, is dependent on non-receptor protein tyrosine kinase Src and results in a decrease in agonist efficacy by reducing G-protein coupling efficiency. Phosphorylated on tyrosine residues; the phosphorylation is involved in agonist-induced G-protein-independent receptor down-regulation. Phosphorylation at Ser-375 is involved in G-protein-dependent but not beta-arrestin-dependent activation of the ERK pathway. Ubiquitinated. A basal ubiquitination seems not to be related to degradation. Ubiquitination is increased upon formation of OPRM1:OPRD1 oligomers leading to proteasomal degradation; the ubiquitination is diminished by RTP4. As to expression, brain. Is expressed in the cerebral cortex, caudate putamen, nucleus accumbens, septal nuclei, thalamus, hippocampus, and habenula. Not detected in cerebellum.

Its subcellular location is the cell membrane. It localises to the cell projection. It is found in the axon. The protein resides in the perikaryon. The protein localises to the dendrite. Its subcellular location is the endosome. Its function is as follows. Receptor for endogenous opioids such as beta-endorphin and endomorphin. Receptor for natural and synthetic opioids including morphine, heroin, DAMGO, fentanyl, etorphine, buprenorphin and methadone. Also activated by enkephalin peptides, such as Met-enkephalin or Met-enkephalin-Arg-Phe, with higher affinity for Met-enkephalin-Arg-Phe. Agonist binding to the receptor induces coupling to an inactive GDP-bound heterotrimeric G-protein complex and subsequent exchange of GDP for GTP in the G-protein alpha subunit leading to dissociation of the G-protein complex with the free GTP-bound G-protein alpha and the G-protein beta-gamma dimer activating downstream cellular effectors. The agonist- and cell type-specific activity is predominantly coupled to pertussis toxin-sensitive G(i) and G(o) G alpha proteins, GNAI1, GNAI2, GNAI3 and GNAO1 isoforms Alpha-1 and Alpha-2, and to a lesser extent to pertussis toxin-insensitive G alpha proteins GNAZ and GNA15. They mediate an array of downstream cellular responses, including inhibition of adenylate cyclase activity and both N-type and L-type calcium channels, activation of inward rectifying potassium channels, mitogen-activated protein kinase (MAPK), phospholipase C (PLC), phosphoinositide/protein kinase (PKC), phosphoinositide 3-kinase (PI3K) and regulation of NF-kappa-B. Also couples to adenylate cyclase stimulatory G alpha proteins. The selective temporal coupling to G-proteins and subsequent signaling can be regulated by RGSZ proteins, such as RGS9, RGS17 and RGS4. Phosphorylation by members of the GPRK subfamily of Ser/Thr protein kinases and association with beta-arrestins is involved in short-term receptor desensitization. Beta-arrestins associate with the GPRK-phosphorylated receptor and uncouple it from the G-protein thus terminating signal transduction. The phosphorylated receptor is internalized through endocytosis via clathrin-coated pits which involves beta-arrestins. The activation of the ERK pathway occurs either in a G-protein-dependent or a beta-arrestin-dependent manner and is regulated by agonist-specific receptor phosphorylation. Acts as a class A G-protein coupled receptor (GPCR) which dissociates from beta-arrestin at or near the plasma membrane and undergoes rapid recycling. Receptor down-regulation pathways are varying with the agonist and occur dependent or independent of G-protein coupling. Endogenous ligands induce rapid desensitization, endocytosis and recycling. Heterooligomerization with other GPCRs can modulate agonist binding, signaling and trafficking properties. The polypeptide is Mu-type opioid receptor (Oprm1) (Rattus norvegicus (Rat)).